The following is a 258-amino-acid chain: Small ribosomal subunit protein uS2 (258 aa).

The disordered stretch occupies residues 226-258 (QGVSNEEVAAEQNIDLDEKEKSEETEATEATEE).

Belongs to the universal ribosomal protein uS2 family.

This chain is Small ribosomal subunit protein uS2, found in Staphylococcus aureus (strain COL).